We begin with the raw amino-acid sequence, 830 residues long: Probable glucan 1,3-beta-glucosidase D (830 aa).

The span at 1–34 (MPSQSRSRDRYRGRDTEYTRRRYPDEHDYSHDDH) shows a compositional bias: basic and acidic residues. The segment at 1 to 279 (MPSQSRSRDR…PPMDARWPKG (279 aa)) is disordered. At 1–301 (MPSQSRSRDR…GRPFWKQKKW (301 aa)) the chain is on the cytoplasmic side. Positions 35 to 51 (DYDYDDDDDDNDDLEQD) are enriched in acidic residues. Composition is skewed to basic and acidic residues over residues 52-98 (VTER…ERRR) and 110-175 (QHRE…KHQS). The span at 181 to 194 (SASHLLSADALARL) shows a compositional bias: low complexity. Composition is skewed to basic and acidic residues over residues 198 to 215 (YEKEDRRERAHAKDAAKA), 228 to 243 (EQERGLRAEKPRDRSR), and 253 to 264 (EEGRGPEMEFRR). A helical; Signal-anchor for type II membrane protein membrane pass occupies residues 302 to 322 (LIGIGVVILILVIVIPVAVVV). At 323-830 (SKKHNDKPNA…PDFGSLPEYY (508 aa)) the chain is on the extracellular side. Residues 327–351 (NDKPNATTTQPDGTTPSNSNLDGLS) are disordered. Residues 330–348 (PNATTTQPDGTTPSNSNLD) show a composition bias toward polar residues. Residues N331, N376, N381, N393, N546, and N558 are each glycosylated (N-linked (GlcNAc...) asparagine). The active-site Proton donor is E597. N-linked (GlcNAc...) asparagine glycosylation is found at N610, N636, N669, and N689. E701 functions as the Nucleophile in the catalytic mechanism.

Belongs to the glycosyl hydrolase 5 (cellulase A) family.

The protein localises to the cell membrane. It catalyses the reaction Successive hydrolysis of beta-D-glucose units from the non-reducing ends of (1-&gt;3)-beta-D-glucans, releasing alpha-glucose.. In terms of biological role, glucosidase involved in the degradation of cellulosic biomass. Active on lichenan. In Aspergillus clavatus (strain ATCC 1007 / CBS 513.65 / DSM 816 / NCTC 3887 / NRRL 1 / QM 1276 / 107), this protein is Probable glucan 1,3-beta-glucosidase D (exgD).